The primary structure comprises 316 residues: uncharacterized protein (316 aa).

2 disordered regions span residues 82–105 (AMAAASTGAGSSSGTNVGGSSGGN) and 238–257 (ASVSVQTTQQSRQQSTDTQE). 2 stretches are compositionally biased toward low complexity: residues 84 to 96 (AAASTGAGSSSGT) and 239 to 255 (SVSVQTTQQSRQQSTDT).

It belongs to the MG307/MG309/MG338 family.

This is an uncharacterized protein from Mycoplasma pneumoniae (strain ATCC 29342 / M129 / Subtype 1) (Mycoplasmoides pneumoniae).